We begin with the raw amino-acid sequence, 455 residues long: Argininosuccinate lyase (455 aa).

This sequence belongs to the lyase 1 family. Argininosuccinate lyase subfamily.

The protein localises to the cytoplasm. It catalyses the reaction 2-(N(omega)-L-arginino)succinate = fumarate + L-arginine. The protein operates within amino-acid biosynthesis; L-arginine biosynthesis; L-arginine from L-ornithine and carbamoyl phosphate: step 3/3. In Shewanella baltica (strain OS185), this protein is Argininosuccinate lyase.